The chain runs to 421 residues: Testin (421 aa).

Residues methionine 92–aspartate 199 form the PET domain. The tract at residues glutamate 133 to cysteine 164 is disordered. Residues proline 155–cysteine 164 are compositionally biased toward basic and acidic residues. LIM zinc-binding domains are found at residues tyrosine 234 to glutamate 297, proline 299 to valine 359, and glutamine 362 to serine 421.

This sequence belongs to the prickle / espinas / testin family. Interacts via LIM domain 1 with ZYX. Interacts (via LIM domain 3) with ENAH and VASP. Interacts with ALKBH4, talin, actin, alpha-actinin, GRIP1 and PXN. Interacts (via LIM domain 2) with ACTL7A (via N-terminus). Heterodimer with ACTL7A; the heterodimer interacts with ENAH to form a heterotrimer.

The protein resides in the cytoplasm. Its subcellular location is the cell junction. It is found in the focal adhesion. Scaffold protein that may play a role in cell adhesion, cell spreading and in the reorganization of the actin cytoskeleton. Plays a role in the regulation of cell proliferation. May act as a tumor suppressor. The polypeptide is Testin (TES) (Canis lupus familiaris (Dog)).